A 293-amino-acid polypeptide reads, in one-letter code: MRLVFGEKDAPYEEARVVVLPVPYDLSLSFLPGARRGPEAILLASRELEPFLLELGAAPEEVGIHAAEPVPWVAGMAEESHRLIREEALKHLRAGKWLVALGGDHSVTHPLVQAHREALGEFSLLHVDAHADLYPEWQGSVYSHASPFYRLLTEGFPLVQVGIRAMDRDSLRLARKRGVALFPAHRIHREGLPLDEILEALGKRVYISLDFDALDPSLMPSVGTPLPGGLSYRQVVDLLEAVFREKEVVGMDFVELSPNGQFHAEMTAAQLVYHAIGLKGLQAGWLSREVDHI.

Positions 105, 128, 130, 132, 210, and 212 each coordinate Mn(2+).

It belongs to the arginase family. Requires Mn(2+) as cofactor.

It catalyses the reaction N(1)-(3-aminopropyl)agmatine + H2O = urea + spermidine. The protein operates within amine and polyamine biosynthesis; spermidine biosynthesis. Functionally, involved in the biosynthesis of polyamines which are thought to support the growth of thermophilic microorganisms under high-temperature conditions. It seems that long-chain and branched-chain of polyamines effectively stabilize DNA and RNA, respectively. Catalyzes the decarboxylation of N1-(3-aminopropyl)agmatine to yield spermidine and urea. Does not act on agmatine. This chain is N(1)-aminopropylagmatine ureohydrolase, found in Thermus thermophilus (strain ATCC BAA-163 / DSM 7039 / HB27).